Consider the following 149-residue polypeptide: Ribonuclease pancreatic (149 aa).

An N-terminal signal peptide occupies residues M1–G25. A disordered region spans residues G25 to K62. Residues S28–G42 show a composition bias toward basic and acidic residues. The substrate site is built by K32 and R35. H37 acts as the Proton acceptor in catalysis. Positions S43–T61 are enriched in polar residues. Disulfide bonds link C51/C109, C65/C120, C83/C135, and C90/C97. Substrate contacts are provided by residues K66–T70 and K91. The Proton donor role is filled by H144.

The protein belongs to the pancreatic ribonuclease family. Monomer. Interacts with and forms tight 1:1 complexes with RNH1. Dimerization of two such complexes may occur. Interaction with RNH1 inhibits this protein.

It is found in the secreted. The catalysed reaction is an [RNA] containing cytidine + H2O = an [RNA]-3'-cytidine-3'-phosphate + a 5'-hydroxy-ribonucleotide-3'-[RNA].. It catalyses the reaction an [RNA] containing uridine + H2O = an [RNA]-3'-uridine-3'-phosphate + a 5'-hydroxy-ribonucleotide-3'-[RNA].. Functionally, endonuclease that catalyzes the cleavage of RNA on the 3' side of pyrimidine nucleotides. Acts on single-stranded and double-stranded RNA. This Sundamys muelleri (Mueller's giant sunda rat) protein is Ribonuclease pancreatic (RNASE1).